Reading from the N-terminus, the 921-residue chain is Valine--tRNA ligase (921 aa).

The 'HIGH' region motif lies at 40-50 (PNVTGSLHMGH). The 'KMSKS' region motif lies at 522–526 (KMSKS). An ATP-binding site is contributed by Lys525. Positions 849 to 921 (MADLIDKEAE…LQHKNRIESL (73 aa)) form a coiled coil.

It belongs to the class-I aminoacyl-tRNA synthetase family. ValS type 1 subfamily. In terms of assembly, monomer.

It localises to the cytoplasm. The catalysed reaction is tRNA(Val) + L-valine + ATP = L-valyl-tRNA(Val) + AMP + diphosphate. In terms of biological role, catalyzes the attachment of valine to tRNA(Val). As ValRS can inadvertently accommodate and process structurally similar amino acids such as threonine, to avoid such errors, it has a 'posttransfer' editing activity that hydrolyzes mischarged Thr-tRNA(Val) in a tRNA-dependent manner. In Legionella pneumophila (strain Paris), this protein is Valine--tRNA ligase.